The chain runs to 686 residues: Mitochondrial Rho GTPase 1 (686 aa).

Topologically, residues 1-648 are cytoplasmic; the sequence is MPRRDLVRIV…PAQRIRVVAR (648 aa). In terms of domain architecture, Miro 1 spans 4–172; sequence RDLVRIVLVG…FYFAQKAVLH (169 aa). GTP-binding positions include 13-20, 59-63, and 117-120; these read GDDGVGKS, DTSSN, and NKID. EF-hand domains follow at residues 188 to 223 and 341 to 376; these read KCLEALKRIFTISDVDKDGLLNAHELNQFQQKCFST and LGNQFLTDIFEAYDKDQDGALSQNELDDLFSTSPGN. Residues Asp-201, Asp-203, Asp-205, Glu-212, Asp-354, Asp-356, Asp-358, and Glu-365 each contribute to the Ca(2+) site. One can recognise a Miro 2 domain in the interval 455–624; that stretch reads RNVFLCYVLG…WVAITRVALD (170 aa). Residues 464–471, 506–510, and 574–577 contribute to the GTP site; these read GATGSGKT, EMEGV, and TKSD. Residues 649 to 665 traverse the membrane as a helical; Anchor for type IV membrane protein segment; the sequence is WGLAATTISAIVAVWMK. The Mitochondrial intermembrane segment spans residues 666–686; it reads WQGYSFKGIWGWMAKFAGLRT.

Belongs to the mitochondrial Rho GTPase family.

It localises to the mitochondrion outer membrane. Its function is as follows. Mitochondrial GTPase involved in mitochondrial trafficking. Probably involved in control of anterograde transport of mitochondria and their subcellular distribution. The protein is Mitochondrial Rho GTPase 1 (GEM1) of Cryptococcus neoformans var. neoformans serotype D (strain B-3501A) (Filobasidiella neoformans).